Consider the following 90-residue polypeptide: Small ribosomal subunit protein uS17 (90 aa).

This sequence belongs to the universal ribosomal protein uS17 family. As to quaternary structure, part of the 30S ribosomal subunit.

Its function is as follows. One of the primary rRNA binding proteins, it binds specifically to the 5'-end of 16S ribosomal RNA. This Burkholderia multivorans (strain ATCC 17616 / 249) protein is Small ribosomal subunit protein uS17.